We begin with the raw amino-acid sequence, 600 residues long: Adenine deaminase (600 aa).

This sequence belongs to the metallo-dependent hydrolases superfamily. Adenine deaminase family. It depends on Mn(2+) as a cofactor.

The catalysed reaction is adenine + H2O + H(+) = hypoxanthine + NH4(+). This chain is Adenine deaminase, found in Roseobacter denitrificans (strain ATCC 33942 / OCh 114) (Erythrobacter sp. (strain OCh 114)).